The sequence spans 1873 residues: Ankyrin repeat domain-containing protein 31 (1873 aa).

Disordered regions lie at residues 1–27 and 361–380; these read MEEGVQAPDWDSDETVIEGSVTESDLE and EPLSNKRNSNSVTNSSDQET. A compositionally biased stretch (polar residues) spans 361 to 379; the sequence is EPLSNKRNSNSVTNSSDQE. ANK repeat units lie at residues 488–517, 521–550, and 554–583; these read FGENLVYKAALHDDADLVHHCIKKGGNVNQ, AGWTALHEASVGGFYRTASELLKGGADVNI, and YQITPLHDAVMNGHYKVAELLLLNGADPLF. The segment at 707-740 is disordered; it reads TGLRKGNLHNVKDPNTNVPKGIGRRKTQHKRTQV. Residues 728 to 737 are compositionally biased toward basic residues; that stretch reads IGRRKTQHKR. ANK repeat units follow at residues 1154-1183, 1187-1216, and 1220-1249; these read RGESQLHLAVRRGNLPLVKALIESGADVNL, AGWTPLHEASNEGSIDIIVELLKAGAKVNC, and DGILPLHDAVANNHLKAAEILLQNGANPNQ. 4 disordered regions span residues 1242–1263, 1449–1482, 1512–1549, and 1606–1634; these read QNGANPNQKDQKQKSALDEADD, RSEISSEKDSQELTSLENLEHPQSGSLSPVSGSM, FSGNDMNSKQNGSDCTLDGFPKSRHSDGTEKNKLPSQP, and CDQDLSNYDPKRGNRKTSSQQSPTGASES. Over residues 1250 to 1263 the composition is skewed to basic and acidic residues; sequence KDQKQKSALDEADD. Polar residues-rich tracts occupy residues 1460 to 1482 and 1515 to 1525; these read ELTSLENLEHPQSGSLSPVSGSM and NDMNSKQNGSD. A compositionally biased stretch (basic and acidic residues) spans 1535–1544; the sequence is RHSDGTEKNK. A compositionally biased stretch (polar residues) spans 1621 to 1632; sequence KTSSQQSPTGAS. One can recognise an RAMA domain in the interval 1683-1778; that stretch reads KKALNYSTAP…TYLGKELLRY (96 aa).

Interacts with REC114; the interaction is direct. Interacts with IHO1.

The protein localises to the nucleus. Its subcellular location is the chromosome. Functionally, required for DNA double-strand breaks (DSBs) formation during meiotic recombination. Regulates the spatial and temporal patterns of pre-DSB recombinosome assembly and recombination activity by acting as a scaffold that anchors REC114 and other factors to specific genomic locations, thereby regulating DSB formation. Plays a key role in recombination in the pseudoautosomal regions of sex chromosomes. The polypeptide is Ankyrin repeat domain-containing protein 31 (Homo sapiens (Human)).